The following is a 337-amino-acid chain: DNA-directed RNA polymerase subunit alpha (337 aa).

Residues 1-231 are alpha N-terminal domain (alpha-NTD); it reads MRNITTSAYT…KQLSVFDKIT (231 aa). Residues 247–337 are alpha C-terminal domain (alpha-CTD); it reads ENTKLLQNIT…IAELKAQNEG (91 aa).

Belongs to the RNA polymerase alpha chain family. Homodimer. The RNAP catalytic core consists of 2 alpha, 1 beta, 1 beta' and 1 omega subunit. When a sigma factor is associated with the core the holoenzyme is formed, which can initiate transcription.

The enzyme catalyses RNA(n) + a ribonucleoside 5'-triphosphate = RNA(n+1) + diphosphate. Its function is as follows. DNA-dependent RNA polymerase catalyzes the transcription of DNA into RNA using the four ribonucleoside triphosphates as substrates. The chain is DNA-directed RNA polymerase subunit alpha from Campylobacter jejuni subsp. jejuni serotype O:2 (strain ATCC 700819 / NCTC 11168).